The following is a 475-amino-acid chain: 23S rRNA (uracil(1939)-C(5))-methyltransferase RlmD (475 aa).

Over residues 1-10 (MAMLGKRRPP) the composition is skewed to basic residues. The interval 1–33 (MAMLGKRRPPRTANERVRRERGSATRRDDATAD) is disordered. A compositionally biased stretch (basic and acidic residues) spans 13-30 (ANERVRRERGSATRRDDA). Positions 26-85 (RRDDATADGLSIERLAHDGRGVARDPHGKTVFVDQALPGERVRVAVHRQRKRFDEAHVVE) constitute a TRAM domain. The [4Fe-4S] cluster site is built by Cys98, Cys104, Cys107, and Cys183. The S-adenosyl-L-methionine site is built by Gln294, Phe323, Asn328, Glu344, Asp371, and Asp388. The active-site Nucleophile is Cys414. Residues 455 to 475 (TRDTPRGRSTSVEREDHGQGP) form a disordered region. A compositionally biased stretch (basic and acidic residues) spans 457 to 475 (DTPRGRSTSVEREDHGQGP).

It belongs to the class I-like SAM-binding methyltransferase superfamily. RNA M5U methyltransferase family. RlmD subfamily.

It carries out the reaction uridine(1939) in 23S rRNA + S-adenosyl-L-methionine = 5-methyluridine(1939) in 23S rRNA + S-adenosyl-L-homocysteine + H(+). Its function is as follows. Catalyzes the formation of 5-methyl-uridine at position 1939 (m5U1939) in 23S rRNA. This Chromohalobacter salexigens (strain ATCC BAA-138 / DSM 3043 / CIP 106854 / NCIMB 13768 / 1H11) protein is 23S rRNA (uracil(1939)-C(5))-methyltransferase RlmD.